The chain runs to 324 residues: Adipolin (324 aa).

The signal sequence occupies residues Met1–Ala24. Disordered stretches follow at residues Glu28–Leu66 and Gly83–Ala121. Positions Glu40–Ser49 are enriched in polar residues. N-linked (GlcNAc...) asparagine glycosylation is present at Asn43. Residues Glu50–Glu60 are compositionally biased toward basic and acidic residues. Residues Ser86–Arg98 are compositionally biased toward basic residues. Residues Pro103–Met118 show a composition bias toward pro residues. One can recognise a C1q domain in the interval Tyr169–Leu324.

The protein belongs to the adipolin/erythroferrone family. As to quaternary structure, homomultimer; disulfide-linked.

The protein resides in the secreted. Insulin-sensitizing adipocyte-secreted protein (adipokine) that regulates glucose metabolism in liver and adipose tissue. The chain is Adipolin (c1qtnf12) from Xenopus tropicalis (Western clawed frog).